The sequence spans 81 residues: ATP synthase subunit c, chloroplastic (81 aa).

The next 2 helical transmembrane spans lie at 3–23 (PLIASASVIAAGLAVGLASIG) and 57–77 (LAFMEALTIYGLVVALALLFA).

This sequence belongs to the ATPase C chain family. As to quaternary structure, F-type ATPases have 2 components, F(1) - the catalytic core - and F(0) - the membrane proton channel. F(1) has five subunits: alpha(3), beta(3), gamma(1), delta(1), epsilon(1). F(0) has four main subunits: a(1), b(1), b'(1) and c(10-14). The alpha and beta chains form an alternating ring which encloses part of the gamma chain. F(1) is attached to F(0) by a central stalk formed by the gamma and epsilon chains, while a peripheral stalk is formed by the delta, b and b' chains.

The protein localises to the plastid. It localises to the chloroplast thylakoid membrane. F(1)F(0) ATP synthase produces ATP from ADP in the presence of a proton or sodium gradient. F-type ATPases consist of two structural domains, F(1) containing the extramembraneous catalytic core and F(0) containing the membrane proton channel, linked together by a central stalk and a peripheral stalk. During catalysis, ATP synthesis in the catalytic domain of F(1) is coupled via a rotary mechanism of the central stalk subunits to proton translocation. In terms of biological role, key component of the F(0) channel; it plays a direct role in translocation across the membrane. A homomeric c-ring of between 10-14 subunits forms the central stalk rotor element with the F(1) delta and epsilon subunits. This Chaetosphaeridium globosum (Charophycean green alga) protein is ATP synthase subunit c, chloroplastic.